A 944-amino-acid polypeptide reads, in one-letter code: UvrABC system protein A (944 aa).

31 to 38 (GLSGSGKS) contacts ATP. The segment at 253-280 (CPVCGHAISELEPKLFSFNNPAGACPTC) adopts a C4-type zinc-finger fold. ABC transporter domains lie at 309–586 (WDRR…PDSL) and 606–936 (RNKK…HYLK). 639–646 (GVSGSGKS) is a binding site for ATP. Residues 739-765 (CEACQGDGLIKVEMHFLPDIYVPCDVC) form a C4-type zinc finger.

This sequence belongs to the ABC transporter superfamily. UvrA family. As to quaternary structure, forms a heterotetramer with UvrB during the search for lesions.

It localises to the cytoplasm. Functionally, the UvrABC repair system catalyzes the recognition and processing of DNA lesions. UvrA is an ATPase and a DNA-binding protein. A damage recognition complex composed of 2 UvrA and 2 UvrB subunits scans DNA for abnormalities. When the presence of a lesion has been verified by UvrB, the UvrA molecules dissociate. The polypeptide is UvrABC system protein A (Pseudomonas putida (strain ATCC 47054 / DSM 6125 / CFBP 8728 / NCIMB 11950 / KT2440)).